The sequence spans 240 residues: Probable xyloglucan-specific endo-beta-1,4-glucanase A (240 aa).

Residues 1–15 form the signal peptide; that stretch reads MKFLTPLVLSSLASA.

Belongs to the glycosyl hydrolase 12 (cellulase H) family.

It localises to the secreted. It catalyses the reaction xyloglucan + H2O = xyloglucan oligosaccharides.. Catalyzes endohydrolysis of 1,4-beta-D-glucosidic linkages in xyloglucan with retention of the beta-configuration of the glycosyl residues. Specific for xyloglucan and does not hydrolyze other cell wall components. The chain is Probable xyloglucan-specific endo-beta-1,4-glucanase A (xgeA) from Aspergillus oryzae (strain ATCC 42149 / RIB 40) (Yellow koji mold).